A 512-amino-acid polypeptide reads, in one-letter code: MTTSKDTTKVHKPWTEVVTEKRALRDARIDKHLKSDIKFPSDGISFETVDIDVLTSLLRDRKVSAVEVIHAHSRACEAQKQTNCLTEICFDDALEQATQLDEFQQEHGQLMGPLHGVPVTVKDQFNIRGLDSTLGYVAKAFSPAESDAPLVQTLKKLGAVIIAKTNLPQSIMWCETNNPLWGLTTHPEDPKLTPGGSSGGEAAMLLMGASIIGWGTDIGGSIRIPCHMNGLWGLKPSSGRLSYRGVEVTLEGQQHIPSAVGPMARSLSCLKLVTKLAIEAEPWAIDPQLPPVPWRDGIFQATSTRPLSVFRDLVTKLEAAGHEVIEWDSSLNSSIIDIMDGYYSADGGEDIRSAVSAGGEPFIPQIQAFVNRGEPISVFEYWQLNKRKIAIQEAYHDMWDNKRSPTSRPVDVLLVPTMPHTAVPHGSCRWTGYTKIFNLLDYTALTFPAGKAPRGENDGSFWEHVPRNEVDAWNQRLYDPVTMGGRHVGLQIVGRRFEEEKVPIVLKPKCIF.

Residues Lys122 and Ser197 each act as charge relay system in the active site. Residues Ser197 and 218–221 each bind substrate; that span reads IGGS. Ser221 functions as the Acyl-ester intermediate in the catalytic mechanism.

It belongs to the amidase family.

The enzyme catalyses a monocarboxylic acid amide + H2O = a monocarboxylate + NH4(+). It functions in the pathway xenobiotic degradation. Functionally, amidase; part of the Fusarium detoxification of benzoxazolinone cluster 2 (FDB2) involved in the degradation of benzoxazolinones produced by the host plant. Maize, wheat, and rye produce the 2 benzoxazinone phytoanticipins 2,4-dihy-droxy-7-methoxy-1,4-benzoxazin-3-one (DIMBOA) and 2,4-dihydroxy-1,4-benzoxazin-3-one (DIBOA) that, due to their inherent instability once released, spontaneously degrade to the more stable corresponding benzoxazolinones, 6-methoxy-2-benzoxazolinone (MBOA) and 2-benzoxazolinone (BOA), respectively. The first step in the detoxification of benzoxazolinones involves the hydrolysis of the cyclic ester bond of benzoxazolinones by the FDB1 cluster gamma-lactamase MBL1 to aminophenols. MBL1 is able to convert BOA into 2-aminophenol (2-AP), as well as MBOA into 5-methoxy-2-aminophenol (2-AMP). The FDB2 cluster N-malonyltransferase FDB2/NAT1 then metabolizes aminophenols via N-malonylation to non-toxic malonamic acids. FDB2/NAT1 converts 2-AP into N-(2-hydroxyphenyl) malonamic acid (HPMA) and 2-AMP into N-(2-hydroxy-4-methoxyphenyl) malonamic acid (HMPMA). The duplicated dienlactone hydrolases DLH1 and DLH2 may provide redundant function for hydrolyzing the lactone moiety in the BOA molecule. The roles of the amidases an other enzymes encoded by the 2 FDB clusters have not been identified so far. The sequence is that of Amidase 2 from Gibberella moniliformis (strain M3125 / FGSC 7600) (Maize ear and stalk rot fungus).